The chain runs to 467 residues: Acetaldehyde dehydrogenase (acetylating) EutE (467 aa).

Belongs to the EutE/PduP family. Interacts with EutS, which targets it to the interior of the BMC. It depends on Has a very strong preference for NAD(+) over NADP(+). as a cofactor.

The protein resides in the bacterial microcompartment. The enzyme catalyses acetaldehyde + NAD(+) + CoA = acetyl-CoA + NADH + H(+). Its pathway is amine and polyamine degradation; ethanolamine degradation. Functionally, acts as the second step in ethanolamine degradation by converting acetaldehyde into acetyl-CoA. May play a role in bacterial microcompartment (BMC) assembly or maintenance. Directly targeted to the BMC. Its heterologous expression in S.cerevisiae increases the level of acetylating acetaldehyde dehydrogenase activity. The chain is Acetaldehyde dehydrogenase (acetylating) EutE (eutE) from Escherichia coli (strain K12).